We begin with the raw amino-acid sequence, 81 residues long: Adipogenin (81 aa).

A helical membrane pass occupies residues 16–36 (FLVFWLCLPVALLLFLLIIWL).

Belongs to the adipogenin family. In terms of tissue distribution, highly expressed in subcutaneous, perirenal and mesecentric adipose tissue.

It localises to the membrane. The protein resides in the nucleus. In terms of biological role, plays a role in stimulating adipocyte differentiation and development. The chain is Adipogenin from Bos taurus (Bovine).